Reading from the N-terminus, the 235-residue chain is Thaumatin I (235 aa).

An N-terminal signal peptide occupies residues 1–22 (MAATTCFFFLFPFLLLLTLSRA). Intrachain disulfides connect Cys31–Cys226, Cys78–Cys88, Cys93–Cys99, Cys143–Cys215, Cys148–Cys199, Cys156–Cys167, Cys171–Cys180, and Cys181–Cys186. Positions 230 to 235 (LELEDE) are cleaved as a propeptide — removed in mature form.

Belongs to the thaumatin family.

It is found in the cytoplasmic vesicle. In terms of biological role, taste-modifying protein; intensely sweet-tasting. It is 100000 times sweeter than sucrose on a molar basis. In Thaumatococcus daniellii (Katemfe), this protein is Thaumatin I.